Consider the following 424-residue polypeptide: Dihydrolipoyllysine-residue succinyltransferase component of 2-oxoglutarate dehydrogenase complex (424 aa).

The Lipoyl-binding domain occupies 1-76 (MPEVKVPELA…EVGQAIAVVG (76 aa)). Lysine 42 carries the post-translational modification N6-lipoyllysine. 2 disordered regions span residues 76 to 138 (GEGS…KYAR) and 155 to 204 (VRKE…RKKT). The span at 91-105 (EAPKQETETSTDDKS) shows a compositional bias: basic and acidic residues. Residues 122-131 (DNNQRVNATP) show a composition bias toward polar residues. Residues 128–164 (NATPSARKYAREKGIDLSEIAAASNDVVRKEHVDQSQ) form the Peripheral subunit-binding (PSBD) domain. The segment covering 162 to 176 (QSQTQTSTQQQAQPA) has biased composition (low complexity). Active-site residues include histidine 395 and aspartate 399.

Belongs to the 2-oxoacid dehydrogenase family. As to quaternary structure, forms a 24-polypeptide structural core with octahedral symmetry. Part of the 2-oxoglutarate dehydrogenase (OGDH) complex composed of E1 (2-oxoglutarate dehydrogenase), E2 (dihydrolipoamide succinyltransferase) and E3 (dihydrolipoamide dehydrogenase); the complex contains multiple copies of the three enzymatic components (E1, E2 and E3). The cofactor is (R)-lipoate.

It catalyses the reaction N(6)-[(R)-dihydrolipoyl]-L-lysyl-[protein] + succinyl-CoA = N(6)-[(R)-S(8)-succinyldihydrolipoyl]-L-lysyl-[protein] + CoA. It functions in the pathway amino-acid degradation; L-lysine degradation via saccharopine pathway; glutaryl-CoA from L-lysine: step 6/6. In terms of biological role, E2 component of the 2-oxoglutarate dehydrogenase (OGDH) complex which catalyzes the second step in the conversion of 2-oxoglutarate to succinyl-CoA and CO(2). This is Dihydrolipoyllysine-residue succinyltransferase component of 2-oxoglutarate dehydrogenase complex (odhB) from Staphylococcus saprophyticus subsp. saprophyticus (strain ATCC 15305 / DSM 20229 / NCIMB 8711 / NCTC 7292 / S-41).